We begin with the raw amino-acid sequence, 551 residues long: Genetic interactor of prohibitins 3, mitochondrial (551 aa).

Residues 1–24 (MFVVRRSIVFQQSRRQFSGSIAWL) constitute a mitochondrion transit peptide. Residues 118-299 (LKEVIRSVPN…IYDLPGYSEN (182 aa)) enclose the CP-type G domain.

This sequence belongs to the TRAFAC class YlqF/YawG GTPase family. GEP3 subfamily.

It is found in the mitochondrion. In terms of biological role, may be involved in the mitochondrial lipid metabolism. The chain is Genetic interactor of prohibitins 3, mitochondrial (GEP3) from Vanderwaltozyma polyspora (strain ATCC 22028 / DSM 70294 / BCRC 21397 / CBS 2163 / NBRC 10782 / NRRL Y-8283 / UCD 57-17) (Kluyveromyces polysporus).